The following is a 177-amino-acid chain: Ubiquinol-cytochrome c reductase iron-sulfur subunit (177 aa).

A helical transmembrane segment spans residues 18–38 (MVLTASSVAAIGAVCTLWPLV). One can recognise a Rieske domain in the interval 88–175 (ARAVKMSELI…YTFISDKKIR (88 aa)). 4 residues coordinate [2Fe-2S] cluster: C120, H122, C139, and H142. Cysteines 125 and 141 form a disulfide.

Belongs to the Rieske iron-sulfur protein family. In terms of assembly, the main subunits of complex b-c1 are: cytochrome b, cytochrome c1 and the Rieske protein. The cofactor is [2Fe-2S] cluster.

It is found in the cell membrane. It catalyses the reaction a quinol + 2 Fe(III)-[cytochrome c](out) = a quinone + 2 Fe(II)-[cytochrome c](out) + 2 H(+)(out). Its function is as follows. Component of the ubiquinol-cytochrome c reductase complex (complex III or cytochrome b-c1 complex), which is a respiratory chain that generates an electrochemical potential coupled to ATP synthesis. This is Ubiquinol-cytochrome c reductase iron-sulfur subunit (petA) from Rickettsia conorii (strain ATCC VR-613 / Malish 7).